A 207-amino-acid chain; its full sequence is Dephospho-CoA kinase (207 aa).

Positions 12-207 (LIGITGMIGG…LYSTLLGKML (196 aa)) constitute a DPCK domain. Residue 20–25 (GGGKST) participates in ATP binding.

Belongs to the CoaE family.

The protein localises to the cytoplasm. It catalyses the reaction 3'-dephospho-CoA + ATP = ADP + CoA + H(+). The protein operates within cofactor biosynthesis; coenzyme A biosynthesis; CoA from (R)-pantothenate: step 5/5. Its function is as follows. Catalyzes the phosphorylation of the 3'-hydroxyl group of dephosphocoenzyme A to form coenzyme A. This chain is Dephospho-CoA kinase, found in Leptospira interrogans serogroup Icterohaemorrhagiae serovar Lai (strain 56601).